A 475-amino-acid chain; its full sequence is Ankyrin repeat, SAM and basic leucine zipper domain-containing protein 1 (475 aa).

Residues 1–25 (MAAGALRGLPVAGGGESSESEDDGW) are disordered. Phosphoserine is present on residues S17, S18, and S20. ANK repeat units lie at residues 45 to 74 (EKKEKFKKAMTIGDVSLVQELLDSGISVDS), 78 to 107 (YGWTPLMYAASVANAELVRVLLDRGANASF), 110 to 144 (DKQTILITACSAHGSEEQILKCVELLLSRNADPNV), 148 to 177 (RLMTPIMYAARDGHTQVVALLVAHGAEVNT), 181 to 210 (NGYTALTWAARQGHKNIVLKLLELGANKML), and 214 to 243 (DGKMPSEIAKRNKHHEIFNLLSFTLNPLEG). An SAM domain is found at 272–334 (SYTAFGDLEV…KILAALKELQ (63 aa)).

Interacts with DDX4, PIWIL1, RANBP9 and TDRD1.

The protein localises to the cytoplasm. Plays a central role during spermatogenesis by repressing transposable elements and preventing their mobilization, which is essential for the germline integrity. Acts via the piRNA metabolic process, which mediates the repression of transposable elements during meiosis by forming complexes composed of piRNAs and Piwi proteins and governs the methylation and subsequent repression of transposons. Its association with pi-bodies suggests a participation in the primary piRNAs metabolic process. Required prior to the pachytene stage to facilitate the production of multiple types of piRNAs, including those associated with repeats involved in the regulation of retrotransposons. May act by mediating protein-protein interactions during germ cell maturation. This is Ankyrin repeat, SAM and basic leucine zipper domain-containing protein 1 (ASZ1) from Chlorocebus aethiops (Green monkey).